The primary structure comprises 599 residues: Elongation factor 4 (599 aa).

A tr-type G domain is found at 4 to 186; the sequence is ENIRNFSIIA…EIVKKIPPPE (183 aa). GTP-binding positions include 16–21 and 133–136; these read DHGKST and NKID.

The protein belongs to the TRAFAC class translation factor GTPase superfamily. Classic translation factor GTPase family. LepA subfamily.

It localises to the cell inner membrane. The enzyme catalyses GTP + H2O = GDP + phosphate + H(+). Its function is as follows. Required for accurate and efficient protein synthesis under certain stress conditions. May act as a fidelity factor of the translation reaction, by catalyzing a one-codon backward translocation of tRNAs on improperly translocated ribosomes. Back-translocation proceeds from a post-translocation (POST) complex to a pre-translocation (PRE) complex, thus giving elongation factor G a second chance to translocate the tRNAs correctly. Binds to ribosomes in a GTP-dependent manner. This Geobacter metallireducens (strain ATCC 53774 / DSM 7210 / GS-15) protein is Elongation factor 4.